We begin with the raw amino-acid sequence, 370 residues long: Glutamate 5-kinase (370 aa).

Position 11 (Lys-11) interacts with ATP. 3 residues coordinate substrate: Ser-52, Asp-139, and Asn-151. Residues 171-172 and 213-219 contribute to the ATP site; these read TD and TGGMATK. Positions 278 to 356 constitute a PUA domain; that stretch reads TGKLLLDAGA…DQIVQILGYE (79 aa).

The protein belongs to the glutamate 5-kinase family.

Its subcellular location is the cytoplasm. It catalyses the reaction L-glutamate + ATP = L-glutamyl 5-phosphate + ADP. The protein operates within amino-acid biosynthesis; L-proline biosynthesis; L-glutamate 5-semialdehyde from L-glutamate: step 1/2. Catalyzes the transfer of a phosphate group to glutamate to form L-glutamate 5-phosphate. The sequence is that of Glutamate 5-kinase from Synechococcus sp. (strain ATCC 27144 / PCC 6301 / SAUG 1402/1) (Anacystis nidulans).